The chain runs to 517 residues: RNA-binding region-containing protein 3 (517 aa).

Residues 1 to 26 (MAAPEQPLAISRGCTSSSSLSPPRGD) are disordered. A necessary for interaction with PDCD7 region spans residues 1 to 257 (MAAPEQPLAI…STDDEDRQRM (257 aa)). At serine 21 the chain carries Phosphoserine. Positions 27-102 (RTLLVRHLPA…HTLVVEFAKE (76 aa)) constitute an RRM 1 domain. Disordered stretches follow at residues 106–130 (VHSP…DDKE) and 213–254 (MPLH…DEDR). A Phosphoserine modification is found at serine 108. Residues 115-130 (SEKKKRSDDPVEDDKE) show a composition bias toward basic and acidic residues. The tract at residues 211–380 (DYMPLHAPLP…LDITEEIKED (170 aa)) is necessary for binding to m(7)G-capped U12 snRNA. Over residues 217–230 (APLPPTSPQPPEEP) the composition is skewed to pro residues. Acidic residues predominate over residues 231-252 (PLPDEDEELSSEESEYESTDDE). The RRM 2 domain occupies 420–503 (CRIYVKNLAK…KPMVVQFARS (84 aa)).

Component of the U11/U12 snRNPs that are part of the U12-type spliceosome. Found in a complex with m(7)G-capped U12 snRNA. Interacts with PDCD7. Highly expressed in pancreas and kidney. Detected at lower levels in heart, brain, placenta, lung, liver, spleen, thymus, prostate, testis, ovary, small intestine, colon and leukocytes.

Its subcellular location is the nucleus. Participates in pre-mRNA U12-dependent splicing, performed by the minor spliceosome which removes U12-type introns. U12-type introns comprises less than 1% of all non-coding sequences. Binds to the 3'-stem-loop of m(7)G-capped U12 snRNA. This Homo sapiens (Human) protein is RNA-binding region-containing protein 3 (RNPC3).